Consider the following 417-residue polypeptide: Serine hydroxymethyltransferase (417 aa).

(6S)-5,6,7,8-tetrahydrofolate-binding positions include leucine 121 and 125–127 (GHL). Lysine 230 carries the N6-(pyridoxal phosphate)lysine modification. A (6S)-5,6,7,8-tetrahydrofolate-binding site is contributed by 355–357 (SPF).

Belongs to the SHMT family. Homodimer. Pyridoxal 5'-phosphate serves as cofactor.

The protein resides in the cytoplasm. The catalysed reaction is (6R)-5,10-methylene-5,6,7,8-tetrahydrofolate + glycine + H2O = (6S)-5,6,7,8-tetrahydrofolate + L-serine. It functions in the pathway one-carbon metabolism; tetrahydrofolate interconversion. The protein operates within amino-acid biosynthesis; glycine biosynthesis; glycine from L-serine: step 1/1. Its function is as follows. Catalyzes the reversible interconversion of serine and glycine with tetrahydrofolate (THF) serving as the one-carbon carrier. This reaction serves as the major source of one-carbon groups required for the biosynthesis of purines, thymidylate, methionine, and other important biomolecules. Also exhibits THF-independent aldolase activity toward beta-hydroxyamino acids, producing glycine and aldehydes, via a retro-aldol mechanism. This chain is Serine hydroxymethyltransferase, found in Nitrosococcus oceani (strain ATCC 19707 / BCRC 17464 / JCM 30415 / NCIMB 11848 / C-107).